We begin with the raw amino-acid sequence, 41 residues long: Protein UL21 homolog (41 aa).

The protein belongs to the herpesviridae UL21 family.

This is Protein UL21 homolog from Equine herpesvirus 4 (strain 1942) (EHV-4).